The following is a 268-amino-acid chain: Ribosomal RNA small subunit methyltransferase A (268 aa).

6 residues coordinate S-adenosyl-L-methionine: Asn-18, Leu-20, Gly-45, Glu-66, Asp-91, and Asn-112.

This sequence belongs to the class I-like SAM-binding methyltransferase superfamily. rRNA adenine N(6)-methyltransferase family. RsmA subfamily.

It is found in the cytoplasm. It carries out the reaction adenosine(1518)/adenosine(1519) in 16S rRNA + 4 S-adenosyl-L-methionine = N(6)-dimethyladenosine(1518)/N(6)-dimethyladenosine(1519) in 16S rRNA + 4 S-adenosyl-L-homocysteine + 4 H(+). In terms of biological role, specifically dimethylates two adjacent adenosines (A1518 and A1519) in the loop of a conserved hairpin near the 3'-end of 16S rRNA in the 30S particle. May play a critical role in biogenesis of 30S subunits. In Shewanella oneidensis (strain ATCC 700550 / JCM 31522 / CIP 106686 / LMG 19005 / NCIMB 14063 / MR-1), this protein is Ribosomal RNA small subunit methyltransferase A.